Here is a 350-residue protein sequence, read N- to C-terminus: tRNA uridine(34) hydroxylase (350 aa).

The Rhodanese domain occupies 146 to 240 (DDPDALFIDM…YARKAREQGL (95 aa)). Catalysis depends on cysteine 200, which acts as the Cysteine persulfide intermediate.

It belongs to the TrhO family.

The catalysed reaction is uridine(34) in tRNA + AH2 + O2 = 5-hydroxyuridine(34) in tRNA + A + H2O. Functionally, catalyzes oxygen-dependent 5-hydroxyuridine (ho5U) modification at position 34 in tRNAs, the first step in 5-carboxymethoxyuridine (cmo5U) biosynthesis. May be part of an alternate pathway, which is able to bypass cmo5U biogenesis in a subset of tRNAs under aerobic conditions. This chain is tRNA uridine(34) hydroxylase, found in Escherichia coli O157:H7.